Reading from the N-terminus, the 324-residue chain is Melanoma-associated antigen B16 (324 aa).

Positions 1–15 (MSQDQESPRCTHDQH) are enriched in basic and acidic residues. Disordered regions lie at residues 1–22 (MSQD…FSET) and 39–108 (LSSS…PRNV). Over residues 70–81 (SSSIAVTTTSSS) the composition is skewed to low complexity. Residues 82-95 (ESDEASSNQEEEDS) show a composition bias toward acidic residues. Positions 113–312 (LDQKVAFLVN…HSFPSQYAEA (200 aa)) constitute an MAGE domain.

The protein is Melanoma-associated antigen B16 (MAGEB16) of Homo sapiens (Human).